We begin with the raw amino-acid sequence, 590 residues long: Putative ABC transporter ATP-binding protein MM_3016 (590 aa).

2 consecutive ABC transporter domains span residues 11 to 251 and 317 to 550; these read VRFE…KLGI and VRIE…AGLI. ATP is bound by residues 45–52 and 350–357; these read GPSGCGKS and GHNGAGKT.

The protein belongs to the ABC transporter superfamily.

It is found in the cell membrane. In terms of biological role, probably part of an ABC transporter complex. Responsible for energy coupling to the transport system. The sequence is that of Putative ABC transporter ATP-binding protein MM_3016 from Methanosarcina mazei (strain ATCC BAA-159 / DSM 3647 / Goe1 / Go1 / JCM 11833 / OCM 88) (Methanosarcina frisia).